Reading from the N-terminus, the 773-residue chain is Polymeric immunoglobulin receptor (773 aa).

An N-terminal signal peptide occupies residues 1 to 18 (MALFLLTCLLAVFSAATA). Topologically, residues 19 to 647 (QSSLLGPSSI…SASGQSGSAK (629 aa)) are extracellular. Residues 25–131 (PSSIFGPGEV…RGLDFGVNVL (107 aa)) form the Ig-like V-type 1; required for binding to polymeric IgA and IgM domain. Cystine bridges form between Cys-46/Cys-115, Cys-155/Cys-225, Cys-260/Cys-324, Cys-369/Cys-438, and Cys-478/Cys-538. Residue Lys-88 is glycosylated (N-linked (GlcNAc...) asparagine; in variant N-88). Asn-108 carries N-linked (GlcNAc...) asparagine glycosylation. 4 consecutive Ig-like V-type domains span residues 138 to 232 (PDDV…SDPT), 233 to 340 (AEEQ…TQLR), 352 to 455 (RSPP…LQIV), and 461 to 557 (PTID…VELT). A glycan (N-linked (GlcNAc...) asparagine) is linked at Asn-418. Positions 619 to 641 (AVQSAEDPASGSRASVDASSASG) are disordered. Over residues 632 to 641 (ASVDASSASG) the composition is skewed to low complexity. Residues 648–670 (VLISTLVPLGLVLAAGAMAVAIA) traverse the membrane as a helical segment. The Cytoplasmic portion of the chain corresponds to 671–773 (RARHRRNVDR…AEHQDGPKEA (103 aa)). Phosphoserine is present on residues Ser-682, Ser-691, Ser-698, and Ser-744. Residues 725 to 746 (ATATESTVEIEEPKKAKRSSKE) are disordered. Residues 735–746 (EEPKKAKRSSKE) are compositionally biased toward basic and acidic residues.

In terms of assembly, interacts (mainly via CDR1-like domain) with dimeric IgA. Interacts (mainly via CDR2-like domain) with pentameric IgM. Either free or part of the secretory IgA (sIgA) complex that consists of two, four or five IgA monomers, and two additional non-Ig polypeptides, namely the JCHAIN and the secretory component (the proteolytic product of PIGR). Free secretory component interacts with bacterial antigens toxA of C.difficile and eae of E.coli. N-glycosylated. N-glycosylation is required for anchoring IgA molecules to mucus, but is not necessary for Ig binding.

The protein localises to the cell membrane. It localises to the secreted. Functionally, mediates selective transcytosis of polymeric IgA and IgM across mucosal epithelial cells. Binds polymeric IgA and IgM at the basolateral surface of epithelial cells. The complex is then transported across the cell to be secreted at the apical surface. During this process, a cleavage occurs that separates the extracellular (known as the secretory component) from the transmembrane segment. Its function is as follows. Through its N-linked glycans ensures anchoring of secretory IgA (sIgA) molecules to mucus lining the epithelial surface to neutralize extracellular pathogens. On its own (free form) may act as a non-specific microbial scavenger to prevent pathogen interaction with epithelial cells. This chain is Polymeric immunoglobulin receptor (PIGR), found in Oryctolagus cuniculus (Rabbit).